A 319-amino-acid polypeptide reads, in one-letter code: MGQGLWRVARNQQLQQEGYGEQGYLSREQSRRVAASNMSHTSHRKHVQGGIDIYHLLKTRKSKEQEGFINLEMLPPELSFTILSYLNATDLCLASCVWQDLANDELLWQGLCKSTWGHCSIYNKNPPLGFSFRKLYMQLDEGSLTFNANPDEGVNYFMSKGILDDSPKEIAKFIFCTRTLNWKKLRIYLDERRDVLDDLVTLHNFRNQFLPNALREFFRHIHAPEERGEYLETLITKFSHRFCACNPDLMRELGLSPDAVYVLCYSLILLSIDLTSPHVKNKMSKREFIRNTRRAAQNISEDFVGHLYDNIYLIGHVAA.

The 44-residue stretch at 68–111 (FINLEMLPPELSFTILSYLNATDLCLASCVWQDLANDELLWQGL) folds into the F-box domain. The 131-residue stretch at 146 to 276 (FNANPDEGVN…LILLSIDLTS (131 aa)) folds into the SEC7 domain.

In terms of biological role, may promote guanine-nucleotide exchange on an ARF. Promotes the activation of ARF through replacement of GDP with GTP (Potential). The protein is F-box only protein 8 (FBXO8) of Bos taurus (Bovine).